A 491-amino-acid polypeptide reads, in one-letter code: Cobyric acid synthase (491 aa).

The 194-residue stretch at 251 to 444 folds into the GATase cobBQ-type domain; it reads GITIAVIRLP…LHGLFTNDEF (194 aa). The Nucleophile role is filled by C329. H436 is a catalytic residue.

Belongs to the CobB/CobQ family. CobQ subfamily.

It participates in cofactor biosynthesis; adenosylcobalamin biosynthesis. Its function is as follows. Catalyzes amidations at positions B, D, E, and G on adenosylcobyrinic A,C-diamide. NH(2) groups are provided by glutamine, and one molecule of ATP is hydrogenolyzed for each amidation. This is Cobyric acid synthase from Chloroflexus aggregans (strain MD-66 / DSM 9485).